The chain runs to 337 residues: Heme A synthase (337 aa).

The next 5 membrane-spanning stretches (helical) occupy residues 6–26, 87–107, 119–139, 154–174, and 192–212; these read ITKWLFVSCIMVIAMVVIGGI, FIHRLLGRMTVLIYIVPLIYF, LPYIIALLLFCVQGFMGWYMV, LAFHLIIAVIIYHILFYQLIK, and LIFSGIAITVIYVQIFLGALV. Histidine 256 is a binding site for heme. The next 3 membrane-spanning stretches (helical) occupy residues 258–278, 285–305, and 308–328; these read LGSYSVFLVVVVLVICLLTIE, IAYFLMIALLMQISTGIITLL, and VPIIIASIHQLFAIILLSIII. Histidine 316 contacts heme.

This sequence belongs to the COX15/CtaA family. Type 2 subfamily. As to quaternary structure, interacts with CtaB. Heme b serves as cofactor.

The protein localises to the cell membrane. The catalysed reaction is Fe(II)-heme o + 2 A + H2O = Fe(II)-heme a + 2 AH2. The protein operates within porphyrin-containing compound metabolism; heme A biosynthesis; heme A from heme O: step 1/1. Its function is as follows. Catalyzes the conversion of heme O to heme A by two successive hydroxylations of the methyl group at C8. The first hydroxylation forms heme I, the second hydroxylation results in an unstable dihydroxymethyl group, which spontaneously dehydrates, resulting in the formyl group of heme A. This Rickettsia akari (strain Hartford) protein is Heme A synthase.